Here is a 476-residue protein sequence, read N- to C-terminus: Nitrosuccinate lyase (476 aa).

Fumarate is bound by residues R137, R140, and R201. The active-site Proton acceptor is the S302. Fumarate is bound by residues K308 and N310. The active-site Proton donor is R341.

This sequence belongs to the class-II fumarase/aspartase family. Homotetramer.

It catalyses the reaction 2-nitrobutanedioate = fumarate + nitrite + H(+). Its pathway is antibiotic biosynthesis. In terms of biological role, part of a gene cluster involved in the biosynthesis of cremeomycin, a light-sensitive o-diazoquinone with antibacterial and antiproliferative effects. Catalyzes the formation of nitrous acid from nitrosuccinic acid (2-nitrobutanedioate) by elimination of its nitro group. In Streptomyces cremeus, this protein is Nitrosuccinate lyase.